A 211-amino-acid chain; its full sequence is N-(5'-phosphoribosyl)anthranilate isomerase (211 aa).

It belongs to the TrpF family.

It catalyses the reaction N-(5-phospho-beta-D-ribosyl)anthranilate = 1-(2-carboxyphenylamino)-1-deoxy-D-ribulose 5-phosphate. It functions in the pathway amino-acid biosynthesis; L-tryptophan biosynthesis; L-tryptophan from chorismate: step 3/5. The sequence is that of N-(5'-phosphoribosyl)anthranilate isomerase from Zymomonas mobilis subsp. pomaceae (strain ATCC 29192 / DSM 22645 / JCM 10191 / CCUG 17912 / NBRC 13757 / NCIMB 11200 / NRRL B-4491 / Barker I).